A 211-amino-acid polypeptide reads, in one-letter code: Holliday junction branch migration complex subunit RuvA (211 aa).

The interval 1 to 63 (MIASLRGTVI…EDSQTLYVFK (63 aa)) is domain I. Residues 64–142 (DADEKRAFAT…DLGEIADTGA (79 aa)) are domain II. Residues 143–157 (VGAAGAVGDGGDGQA) form a flexible linker region. The interval 158–211 (VAPDVREQVLEALVGLGFTESKAGTTIEAVLSQWSAPQAPDASGLLRASLAAIK) is domain III.

The protein belongs to the RuvA family. In terms of assembly, homotetramer. Forms an RuvA(8)-RuvB(12)-Holliday junction (HJ) complex. HJ DNA is sandwiched between 2 RuvA tetramers; dsDNA enters through RuvA and exits via RuvB. An RuvB hexamer assembles on each DNA strand where it exits the tetramer. Each RuvB hexamer is contacted by two RuvA subunits (via domain III) on 2 adjacent RuvB subunits; this complex drives branch migration. In the full resolvosome a probable DNA-RuvA(4)-RuvB(12)-RuvC(2) complex forms which resolves the HJ.

The protein localises to the cytoplasm. Functionally, the RuvA-RuvB-RuvC complex processes Holliday junction (HJ) DNA during genetic recombination and DNA repair, while the RuvA-RuvB complex plays an important role in the rescue of blocked DNA replication forks via replication fork reversal (RFR). RuvA specifically binds to HJ cruciform DNA, conferring on it an open structure. The RuvB hexamer acts as an ATP-dependent pump, pulling dsDNA into and through the RuvAB complex. HJ branch migration allows RuvC to scan DNA until it finds its consensus sequence, where it cleaves and resolves the cruciform DNA. The chain is Holliday junction branch migration complex subunit RuvA from Corynebacterium jeikeium (strain K411).